We begin with the raw amino-acid sequence, 427 residues long: UPF0597 protein CPR_0790 (427 aa).

This sequence belongs to the UPF0597 family.

The chain is UPF0597 protein CPR_0790 from Clostridium perfringens (strain SM101 / Type A).